The following is a 370-amino-acid chain: 4-hydroxy-3-methylbut-2-en-1-yl diphosphate synthase (flavodoxin) (370 aa).

Residues C271, C274, C306, and E313 each contribute to the [4Fe-4S] cluster site.

This sequence belongs to the IspG family. [4Fe-4S] cluster serves as cofactor.

The enzyme catalyses (2E)-4-hydroxy-3-methylbut-2-enyl diphosphate + oxidized [flavodoxin] + H2O + 2 H(+) = 2-C-methyl-D-erythritol 2,4-cyclic diphosphate + reduced [flavodoxin]. Its pathway is isoprenoid biosynthesis; isopentenyl diphosphate biosynthesis via DXP pathway; isopentenyl diphosphate from 1-deoxy-D-xylulose 5-phosphate: step 5/6. Its function is as follows. Converts 2C-methyl-D-erythritol 2,4-cyclodiphosphate (ME-2,4cPP) into 1-hydroxy-2-methyl-2-(E)-butenyl 4-diphosphate. This is 4-hydroxy-3-methylbut-2-en-1-yl diphosphate synthase (flavodoxin) from Actinobacillus pleuropneumoniae serotype 5b (strain L20).